Reading from the N-terminus, the 432-residue chain is 2-oxoglutarate-dependent dioxygenase AOP2 (432 aa).

The region spanning 281–378 is the Fe2OG dioxygenase domain; it reads SGDDVEANDD…RYTAAIFTCP (98 aa). Fe cation is bound by residues H301, D303, and H358. R369 provides a ligand contact to 2-oxoglutarate.

It belongs to the iron/ascorbate-dependent oxidoreductase family. The cofactor is Fe(2+).

Functionally, 2-oxoglutarate-dependent dioxygenase involved in glucosinolates biosynthesis. Catalyzes the conversion of methylsulfinylalkyl glucosinolates to alkenyl glucosinolates. This Arabidopsis thaliana (Mouse-ear cress) protein is 2-oxoglutarate-dependent dioxygenase AOP2 (AOP2).